A 337-amino-acid polypeptide reads, in one-letter code: S-adenosylmethionine:tRNA ribosyltransferase-isomerase (337 aa).

This sequence belongs to the QueA family. Monomer.

It localises to the cytoplasm. The catalysed reaction is 7-aminomethyl-7-carbaguanosine(34) in tRNA + S-adenosyl-L-methionine = epoxyqueuosine(34) in tRNA + adenine + L-methionine + 2 H(+). The protein operates within tRNA modification; tRNA-queuosine biosynthesis. Its function is as follows. Transfers and isomerizes the ribose moiety from AdoMet to the 7-aminomethyl group of 7-deazaguanine (preQ1-tRNA) to give epoxyqueuosine (oQ-tRNA). This Legionella pneumophila (strain Lens) protein is S-adenosylmethionine:tRNA ribosyltransferase-isomerase.